The sequence spans 147 residues: Hemoglobin subunit beta (147 aa).

V2 carries the N-acetylvaline modification. The Globin domain occupies 3–147 (HLTPEEKSAV…VANALAHKYH (145 aa)). The residue at position 13 (T13) is a Phosphothreonine. S45 bears the Phosphoserine mark. The residue at position 60 (K60) is an N6-acetyllysine. Heme b is bound at residue H64. The residue at position 83 (K83) is an N6-acetyllysine. Residue H93 participates in heme b binding. The residue at position 94 (C94) is an S-nitrosocysteine. Residue K145 is modified to N6-acetyllysine.

It belongs to the globin family. As to quaternary structure, heterotetramer of two alpha chains and two beta chains in adult hemoglobin A (HbA). As to expression, red blood cells.

Its function is as follows. Involved in oxygen transport from the lung to the various peripheral tissues. The sequence is that of Hemoglobin subunit beta (HBB) from Pan paniscus (Pygmy chimpanzee).